Reading from the N-terminus, the 514-residue chain is Ribonuclease Y (514 aa).

A helical membrane pass occupies residues 3 to 23 (YMIIYEIIAGILIVVAILIHF). In terms of domain architecture, KH spans 204–289 (TVHVVTLPND…EMVEKAEKEL (86 aa)). Positions 330 to 423 (VLKHSVEVAY…VQAADAISAA (94 aa)) constitute an HD domain.

This sequence belongs to the RNase Y family.

The protein localises to the cell membrane. Its function is as follows. Endoribonuclease that initiates mRNA decay. The chain is Ribonuclease Y from Clostridium kluyveri (strain ATCC 8527 / DSM 555 / NBRC 12016 / NCIMB 10680 / K1).